A 488-amino-acid chain; its full sequence is Dipeptide and tripeptide permease A (488 aa).

The Cytoplasmic portion of the chain corresponds to 1 to 35 (MSTANTPEDEQKPSLNAFKQPRAFYLIFSIELWER). A helical transmembrane segment spans residues 36–56 (FGYYGLQGIMAVYLVKMLGMS). Residues 57 to 60 (EAEA) lie on the Periplasmic side of the membrane. The helical transmembrane segment at 61 to 81 (ITVFAAFTALVYGFVAIGGWL) threads the bilayer. The Cytoplasmic segment spans residues 82–90 (GDKILGTKR). A helical transmembrane segment spans residues 91-111 (VIVLGAIVLAIGYAMVAFSDH). Residues 112–114 (DKD) are Periplasmic-facing. Residues 115-135 (MIYWGLATIAVGNGLFKANPS) form a helical membrane-spanning segment. Residues 136 to 154 (SLLATCYEKDDPQLDGAFT) are Cytoplasmic-facing. Residues 155 to 175 (MYYMSINVGSFLSMLATPWLA) traverse the membrane as a helical segment. At 176–179 (ANYG) the chain is on the periplasmic side. Residues 180-200 (WDVAFALSVVGMLITLANFML) traverse the membrane as a helical segment. Residues 201–219 (CRGWIKDKGSRPDFEPLNY) lie on the Cytoplasmic side of the membrane. Residues 220–240 (LKLLLTLVGIVALTAVSTWLL) traverse the membrane as a helical segment. A topological domain (periplasmic) is located at residue H241. The helical transmembrane segment at 242–262 (NNEVATWSLAIISLGIILIFA) threads the bilayer. At 263–275 (RETFMMKGVARRK) the chain is on the cytoplasmic side. The helical transmembrane segment at 276–296 (MIVAFLLMVEAVVFFVLYDQM) threads the bilayer. Over 297 to 324 (PTSLNFFAIHNVEHAILGFSVEPEQFQS) the chain is Periplasmic. The chain crosses the membrane as a helical span at residues 325–345 (LNPFWIMLASPLLAAIYNFMG). The Cytoplasmic portion of the chain corresponds to 346 to 353 (DKLPMPYK). A helical membrane pass occupies residues 354–374 (FTVGMFLSATAFLVLPLGASM). Over 375–391 (ANEAGIVSSWWLVASYG) the chain is Periplasmic. Residues 392–412 (FQSIGELMISGLGLAMVAQLV) form a helical membrane-spanning segment. Residues 413–415 (PQR) are Cytoplasmic-facing. A helical membrane pass occupies residues 416 to 436 (LMGFIMGAWFLTSAAAAIIAG). Over 437-460 (KVASLMAVPEDVQNAHASLEIYSS) the chain is Periplasmic. The chain crosses the membrane as a helical span at residues 461–481 (VFLQIGIVTGVIALLMLFTAP). The Cytoplasmic segment spans residues 482–488 (MLSKMTQ).

The protein belongs to the major facilitator superfamily. Proton-dependent oligopeptide transporter (POT/PTR) (TC 2.A.17) family. DtpA subfamily.

The protein resides in the cell inner membrane. Proton-dependent permease that transports di- and tripeptides. This chain is Dipeptide and tripeptide permease A, found in Proteus mirabilis (strain HI4320).